The chain runs to 185 residues: Ribosome-recycling factor (185 aa).

Belongs to the RRF family.

The protein resides in the cytoplasm. Its function is as follows. Responsible for the release of ribosomes from messenger RNA at the termination of protein biosynthesis. May increase the efficiency of translation by recycling ribosomes from one round of translation to another. The protein is Ribosome-recycling factor of Histophilus somni (strain 2336) (Haemophilus somnus).